We begin with the raw amino-acid sequence, 200 residues long: TATA-box-binding protein 2 (200 aa).

2 repeat units span residues 25–101 and 115–192.

This sequence belongs to the TBP family. As to quaternary structure, belongs to the TFIID complex together with the TBP-associated factors (TAFs). Binds DNA as monomer. Interacts with TAF1 (via N-terminus). Interacts with TFIIB1. Interacts with PTF2. Interacts with HAT5/ATHB-1 and ATHB-7. Component of a nuclear protein complex containing at least TATA binding proteins (TBPs, e.g. TBP1 and TBP2) and ATX1.

The protein localises to the nucleus. In terms of biological role, general transcription factor (GTF) that functions at the core of the DNA-binding multiprotein factor TFIID. Binding of TFIID to the TATA box is the initial transcriptional step of the pre-initiation complex (PIC), playing a role in the activation of eukaryotic genes transcribed by RNA polymerase II. Interacts with TFIIB1 and is required for activated transcription and possibly basal transcription. May act as GTF of RNA polymerase I-dependent transcription and rRNA synthesis. Forms a ternary complex with PBRP1 and the rDNA promoter region. The sequence is that of TATA-box-binding protein 2 from Arabidopsis thaliana (Mouse-ear cress).